Consider the following 273-residue polypeptide: 4-diphosphocytidyl-2-C-methyl-D-erythritol kinase (273 aa).

Residue K9 is part of the active site. 90–100 (PVAAGLGGGSA) serves as a coordination point for ATP. The active site involves D129.

It belongs to the GHMP kinase family. IspE subfamily.

It carries out the reaction 4-CDP-2-C-methyl-D-erythritol + ATP = 4-CDP-2-C-methyl-D-erythritol 2-phosphate + ADP + H(+). It participates in isoprenoid biosynthesis; isopentenyl diphosphate biosynthesis via DXP pathway; isopentenyl diphosphate from 1-deoxy-D-xylulose 5-phosphate: step 3/6. In terms of biological role, catalyzes the phosphorylation of the position 2 hydroxy group of 4-diphosphocytidyl-2C-methyl-D-erythritol. The polypeptide is 4-diphosphocytidyl-2-C-methyl-D-erythritol kinase (Erythrobacter litoralis (strain HTCC2594)).